Here is a 444-residue protein sequence, read N- to C-terminus: Protein phosphatase 2C homolog C10F6.17c (444 aa).

Positions 85–439 (RYDFNQVASN…DDITVTVIFF (355 aa)) constitute a PPM-type phosphatase domain. Mn(2+)-binding residues include D121, G122, and D344.

Belongs to the PP2C family. It depends on Mg(2+) as a cofactor. Requires Mn(2+) as cofactor.

The protein resides in the mitochondrion. It catalyses the reaction O-phospho-L-seryl-[protein] + H2O = L-seryl-[protein] + phosphate. The catalysed reaction is O-phospho-L-threonyl-[protein] + H2O = L-threonyl-[protein] + phosphate. In terms of biological role, involved in regulation of pyruvate dehydrogenase activity. This chain is Protein phosphatase 2C homolog C10F6.17c, found in Schizosaccharomyces pombe (strain 972 / ATCC 24843) (Fission yeast).